The chain runs to 129 residues: Succinate dehydrogenase subunit 3-2, mitochondrial (129 aa).

Residues 1–58 constitute a mitochondrion transit peptide; sequence MEKYQSKARFAPLSDAPFALRGALGSSNSSFNNIDHLRQSSSSGQARSYTSSPLGALR. Polar residues predominate over residues 27 to 53; that stretch reads SNSSFNNIDHLRQSSSSGQARSYTSSP. Positions 27 to 66 are disordered; sequence SNSSFNNIDHLRQSSSSGQARSYTSSPLGALRPKMFPSGN. His-87 lines the heme pocket. Residues 105–127 form a helical membrane-spanning segment; it reads IFGAALGAVIISIPLATKFSLMF.

As to quaternary structure, component of complex II composed of eight subunits in plants: four classical SDH subunits SDH1, SDH2, SDH3 and SDH4 (a flavoprotein (FP), an iron-sulfur protein (IP), and a cytochrome b composed of a large and a small subunit.), as well as four subunits unknown in mitochondria from bacteria and heterotrophic eukaryotes. It depends on heme as a cofactor.

It is found in the mitochondrion inner membrane. Its pathway is carbohydrate metabolism; tricarboxylic acid cycle. Its function is as follows. Membrane-anchoring subunit of succinate dehydrogenase (SDH). In Oryza sativa subsp. japonica (Rice), this protein is Succinate dehydrogenase subunit 3-2, mitochondrial.